The primary structure comprises 122 residues: NADH-quinone oxidoreductase subunit A (122 aa).

Helical transmembrane passes span 10-30, 66-86, and 91-111; these read MIVL…LTLG, IFAL…PWAV, and LGLF…VGLA.

This sequence belongs to the complex I subunit 3 family. In terms of assembly, NDH-1 is composed of 14 different subunits. Subunits NuoA, H, J, K, L, M, N constitute the membrane sector of the complex.

It is found in the cell membrane. It carries out the reaction a quinone + NADH + 5 H(+)(in) = a quinol + NAD(+) + 4 H(+)(out). NDH-1 shuttles electrons from NADH, via FMN and iron-sulfur (Fe-S) centers, to quinones in the respiratory chain. The immediate electron acceptor for the enzyme in this species is believed to be a menaquinone. Couples the redox reaction to proton translocation (for every two electrons transferred, four hydrogen ions are translocated across the cytoplasmic membrane), and thus conserves the redox energy in a proton gradient. The protein is NADH-quinone oxidoreductase subunit A of Bacillus mycoides (strain KBAB4) (Bacillus weihenstephanensis).